We begin with the raw amino-acid sequence, 417 residues long: Serine hydroxymethyltransferase (417 aa).

Residues Leu-121 and 125 to 127 (GHL) each bind (6S)-5,6,7,8-tetrahydrofolate. Position 229 is an N6-(pyridoxal phosphate)lysine (Lys-229). 355 to 357 (SPF) contacts (6S)-5,6,7,8-tetrahydrofolate.

Belongs to the SHMT family. In terms of assembly, homodimer. Requires pyridoxal 5'-phosphate as cofactor.

It localises to the cytoplasm. It carries out the reaction (6R)-5,10-methylene-5,6,7,8-tetrahydrofolate + glycine + H2O = (6S)-5,6,7,8-tetrahydrofolate + L-serine. The protein operates within one-carbon metabolism; tetrahydrofolate interconversion. Its pathway is amino-acid biosynthesis; glycine biosynthesis; glycine from L-serine: step 1/1. Catalyzes the reversible interconversion of serine and glycine with tetrahydrofolate (THF) serving as the one-carbon carrier. This reaction serves as the major source of one-carbon groups required for the biosynthesis of purines, thymidylate, methionine, and other important biomolecules. Also exhibits THF-independent aldolase activity toward beta-hydroxyamino acids, producing glycine and aldehydes, via a retro-aldol mechanism. The chain is Serine hydroxymethyltransferase from Yersinia enterocolitica serotype O:8 / biotype 1B (strain NCTC 13174 / 8081).